The chain runs to 138 residues: Phosphoribosyl-AMP cyclohydrolase (138 aa).

Mg(2+) is bound at residue D84. Residue C85 coordinates Zn(2+). Positions 86 and 88 each coordinate Mg(2+). Zn(2+)-binding residues include C102 and C109.

It belongs to the PRA-CH family. Homodimer. Mg(2+) serves as cofactor. The cofactor is Zn(2+).

The protein localises to the cytoplasm. It carries out the reaction 1-(5-phospho-beta-D-ribosyl)-5'-AMP + H2O = 1-(5-phospho-beta-D-ribosyl)-5-[(5-phospho-beta-D-ribosylamino)methylideneamino]imidazole-4-carboxamide. It functions in the pathway amino-acid biosynthesis; L-histidine biosynthesis; L-histidine from 5-phospho-alpha-D-ribose 1-diphosphate: step 3/9. Catalyzes the hydrolysis of the adenine ring of phosphoribosyl-AMP. The protein is Phosphoribosyl-AMP cyclohydrolase of Burkholderia multivorans (strain ATCC 17616 / 249).